Here is a 176-residue protein sequence, read N- to C-terminus: Probable inosine/xanthosine triphosphatase (176 aa).

Asp-36 contacts Mg(2+).

Belongs to the YjjX NTPase family. In terms of assembly, homodimer. The cofactor is Mg(2+). Requires Mn(2+) as cofactor.

The catalysed reaction is XTP + H2O = XDP + phosphate + H(+). It carries out the reaction ITP + H2O = IDP + phosphate + H(+). In terms of biological role, phosphatase that hydrolyzes non-canonical purine nucleotides such as XTP and ITP to their respective diphosphate derivatives. Probably excludes non-canonical purines from DNA/RNA precursor pool, thus preventing their incorporation into DNA/RNA and avoiding chromosomal lesions. In Saccharolobus islandicus (strain M.16.4 / Kamchatka #3) (Sulfolobus islandicus), this protein is Probable inosine/xanthosine triphosphatase.